The sequence spans 248 residues: Triosephosphate isomerase (248 aa).

Asparagine 9–lysine 11 contributes to the substrate binding site. The active-site Electrophile is the histidine 94. Glutamate 166 functions as the Proton acceptor in the catalytic mechanism. Substrate-binding positions include glycine 172, serine 212, and glycine 233–glycine 234.

It belongs to the triosephosphate isomerase family. In terms of assembly, homodimer.

Its subcellular location is the cytoplasm. It catalyses the reaction D-glyceraldehyde 3-phosphate = dihydroxyacetone phosphate. It participates in carbohydrate biosynthesis; gluconeogenesis. Its pathway is carbohydrate degradation; glycolysis; D-glyceraldehyde 3-phosphate from glycerone phosphate: step 1/1. Involved in the gluconeogenesis. Catalyzes stereospecifically the conversion of dihydroxyacetone phosphate (DHAP) to D-glyceraldehyde-3-phosphate (G3P). This chain is Triosephosphate isomerase, found in Clostridium botulinum (strain Okra / Type B1).